Reading from the N-terminus, the 468-residue chain is Alcohol dehydrogenase (quinone), cytochrome c subunit (468 aa).

Residues 1–23 (MINRLKVTFSAAAFSLLAGTALA) form the signal peptide. Cytochrome c domains follow at residues 31-134 (ALVQ…MHGV), 178-293 (PEIA…KSLP), and 317-407 (TASV…RTSW). 9 residues coordinate heme c: C45, C48, H49, C193, C196, H197, C330, C333, and H334.

In terms of assembly, the alcohol dehydrogenase multicomponent enzyme system is composed of a dehydrogenase subunit I (AdhA) and a cytochrome c subunit II (AdhB). The cofactor is heme c.

Its subcellular location is the cell membrane. The enzyme catalyses ethanol + a ubiquinone = a ubiquinol + acetaldehyde. Its function is as follows. Cytochrome c component of the alcohol dehydrogenase multicomponent enzyme system which is involved in the production of acetic acid and in the ethanol oxidase respiratory chain. Quinohemoprotein alcohol dehydrogenase (ADH) catalyzes the oxidation of ethanol to acetaldehyde by transferring electrons to the ubiquinone embedded in the membrane phospholipids. The electrons transfer from ethanol to membranous ubiquinone occurs from pyrroloquinoline quinone (PQQ) to one heme c in subunit I (AdhA), and finally to two heme c in subunit II (AdhB). Besides ubiquinone reduction, ADH also has a ubiquinol (QH2) oxidation reaction which mediates electron transfer from ubiquinol to the non-energy generating bypass oxidase system. The electrons transfer occurs from ubiquinol (QH2) to the additional heme c within subunit II (AdhB). The chain is Alcohol dehydrogenase (quinone), cytochrome c subunit from Gluconacetobacter polyoxogenes (Acetobacter polyoxogenes).